Here is a 486-residue protein sequence, read N- to C-terminus: UDP-N-acetylmuramate--L-alanine ligase (486 aa).

123 to 129 (GTHGKTT) contributes to the ATP binding site.

Belongs to the MurCDEF family.

It is found in the cytoplasm. The catalysed reaction is UDP-N-acetyl-alpha-D-muramate + L-alanine + ATP = UDP-N-acetyl-alpha-D-muramoyl-L-alanine + ADP + phosphate + H(+). It participates in cell wall biogenesis; peptidoglycan biosynthesis. Its function is as follows. Cell wall formation. In Pseudomonas fluorescens (strain Pf0-1), this protein is UDP-N-acetylmuramate--L-alanine ligase.